We begin with the raw amino-acid sequence, 179 residues long: Deoxyuridine 5'-triphosphate nucleotidohydrolase, mitochondrial (179 aa).

The N-terminal 41 residues, 1-41 (MPIEQKYFSLFSNLFKRLTTNNNNNNYLKMAPPNFETFKVK), are a transit peptide targeting the mitochondrion. DUTP contacts are provided by residues 97–99 (RSG), 111–114 (GVID), glycine 122, arginine 165, and 170–171 (FG).

It belongs to the dUTPase family. In terms of assembly, homotrimer. Mg(2+) serves as cofactor.

It is found in the mitochondrion. It catalyses the reaction dUTP + H2O = dUMP + diphosphate + H(+). The protein operates within pyrimidine metabolism; dUMP biosynthesis; dUMP from dCTP (dUTP route): step 2/2. In terms of biological role, this enzyme is involved in nucleotide metabolism: it produces dUMP, the immediate precursor of thymidine nucleotides and it decreases the intracellular concentration of dUTP so that uracil cannot be incorporated into DNA. This is Deoxyuridine 5'-triphosphate nucleotidohydrolase, mitochondrial (dut) from Dictyostelium discoideum (Social amoeba).